The chain runs to 442 residues: Ribosomal protein uS12 methylthiotransferase RimO (442 aa).

Positions 8 to 118 (PKVGFVSLGC…VLGHVHKYVA (111 aa)) constitute an MTTase N-terminal domain. Residues cysteine 17, cysteine 53, cysteine 82, cysteine 150, cysteine 154, and cysteine 157 each coordinate [4Fe-4S] cluster. The Radical SAM core domain occupies 136–373 (LTPRHYAYLK…MELQQQVSIR (238 aa)). In terms of domain architecture, TRAM spans 376-442 (ARKVGKEMTV…EYDLWASLIG (67 aa)).

Belongs to the methylthiotransferase family. RimO subfamily. Requires [4Fe-4S] cluster as cofactor.

The protein localises to the cytoplasm. The enzyme catalyses L-aspartate(89)-[ribosomal protein uS12]-hydrogen + (sulfur carrier)-SH + AH2 + 2 S-adenosyl-L-methionine = 3-methylsulfanyl-L-aspartate(89)-[ribosomal protein uS12]-hydrogen + (sulfur carrier)-H + 5'-deoxyadenosine + L-methionine + A + S-adenosyl-L-homocysteine + 2 H(+). Its function is as follows. Catalyzes the methylthiolation of an aspartic acid residue of ribosomal protein uS12. This chain is Ribosomal protein uS12 methylthiotransferase RimO, found in Aeromonas salmonicida (strain A449).